Consider the following 397-residue polypeptide: 1-deoxy-D-xylulose 5-phosphate reductoisomerase (397 aa).

The NADPH site is built by Thr-10, Gly-11, Ser-12, Ile-13, Asn-38, and Asn-125. Lys-126 is a 1-deoxy-D-xylulose 5-phosphate binding site. Glu-127 contacts NADPH. Mn(2+) is bound at residue Asp-151. The 1-deoxy-D-xylulose 5-phosphate site is built by Ser-152, Glu-153, Ser-187, and His-210. A Mn(2+)-binding site is contributed by Glu-153. Gly-216 provides a ligand contact to NADPH. 1-deoxy-D-xylulose 5-phosphate is bound by residues Ser-223, Asn-228, Lys-229, and Glu-232. Glu-232 is a binding site for Mn(2+).

It belongs to the DXR family. Homodimer. Mg(2+) serves as cofactor. Requires Mn(2+) as cofactor.

The catalysed reaction is 2-C-methyl-D-erythritol 4-phosphate + NADP(+) = 1-deoxy-D-xylulose 5-phosphate + NADPH + H(+). The protein operates within isoprenoid biosynthesis; isopentenyl diphosphate biosynthesis via DXP pathway; isopentenyl diphosphate from 1-deoxy-D-xylulose 5-phosphate: step 1/6. In terms of biological role, catalyzes the NADPH-dependent rearrangement and reduction of 1-deoxy-D-xylulose-5-phosphate (DXP) to 2-C-methyl-D-erythritol 4-phosphate (MEP). This chain is 1-deoxy-D-xylulose 5-phosphate reductoisomerase, found in Blochmanniella pennsylvanica (strain BPEN).